The chain runs to 91 residues: MSRTVFCEYLKQEAEGLDFQLYPGELGKRIFDNISKRAWGEWMKKQTMLVNEKKLNMMNADHRKLLEQEMVNFLFEGKDVHIEGYIPQATN.

Belongs to the Fe(2+)-trafficking protein family.

Could be a mediator in iron transactions between iron acquisition and iron-requiring processes, such as synthesis and/or repair of Fe-S clusters in biosynthetic enzymes. The chain is Probable Fe(2+)-trafficking protein from Mannheimia succiniciproducens (strain KCTC 0769BP / MBEL55E).